The primary structure comprises 356 residues: GATA zinc finger domain-containing protein 17 (356 aa).

Residues 91–119 adopt a coiled-coil conformation; sequence LKEFDALEASLNAELECLELQYSSDTSEL. The span at 158-188 shows a compositional bias: low complexity; sequence TASTSTSTPTNTTTTTTTTSNSLTKNNNSAL. A disordered region spans residues 158-294; sequence TASTSTSTPT…DITEESKVKE (137 aa). The segment covering 206-228 has biased composition (acidic residues); that stretch reads SSDDEEDDQKDDQDKDDSDEDNV. The segment covering 260-284 has biased composition (low complexity); the sequence is TAITTTTTPITTTDSNIIGTTTTTD. Residues 304–331 form a GATA-type zinc finger; sequence CYVCKVTETPYWRRGTDNGVVVDLCNEC.

The chain is GATA zinc finger domain-containing protein 17 (gtaQ) from Dictyostelium discoideum (Social amoeba).